Consider the following 386-residue polypeptide: Acetate kinase (386 aa).

Asparagine 9 is a binding site for Mg(2+). Lysine 16 provides a ligand contact to ATP. Arginine 74 serves as a coordination point for substrate. Aspartate 131 acts as the Proton donor/acceptor in catalysis. ATP contacts are provided by residues 191–195 (HLGNG), 265–267 (DFR), and 313–317 (GVGEN). Glutamate 367 contributes to the Mg(2+) binding site.

Belongs to the acetokinase family. Homodimer. It depends on Mg(2+) as a cofactor. Requires Mn(2+) as cofactor.

The protein localises to the cytoplasm. It catalyses the reaction acetate + ATP = acetyl phosphate + ADP. Its pathway is metabolic intermediate biosynthesis; acetyl-CoA biosynthesis; acetyl-CoA from acetate: step 1/2. Its function is as follows. Catalyzes the formation of acetyl phosphate from acetate and ATP. Can also catalyze the reverse reaction. This chain is Acetate kinase, found in Mycolicibacterium gilvum (strain PYR-GCK) (Mycobacterium gilvum (strain PYR-GCK)).